We begin with the raw amino-acid sequence, 736 residues long: Polyribonucleotide nucleotidyltransferase (736 aa).

Mg(2+) contacts are provided by Asp-506 and Asp-512. The KH domain occupies 573–632 (PRLTTIQVPVDAIGLIIGKGGETIRSITEETGAEINIEDDGTVTIACSSVEGTHAALATI). In terms of domain architecture, S1 motif spans 642 to 717 (GTIYLGKVRD…GKTRFALSMR (76 aa)).

It belongs to the polyribonucleotide nucleotidyltransferase family. Mg(2+) serves as cofactor.

It localises to the cytoplasm. It carries out the reaction RNA(n+1) + phosphate = RNA(n) + a ribonucleoside 5'-diphosphate. In terms of biological role, involved in mRNA degradation. Catalyzes the phosphorolysis of single-stranded polyribonucleotides processively in the 3'- to 5'-direction. The protein is Polyribonucleotide nucleotidyltransferase of Chlorobium limicola (strain DSM 245 / NBRC 103803 / 6330).